The sequence spans 1038 residues: Protein argonaute 1D (1038 aa).

Disordered stretches follow at residues 1–58 (MGSR…GAAP) and 110–134 (APHE…PRSL). Gly residues-rich tracts occupy residues 18–29 (RGGGRGGGGRGR) and 43–52 (GHGGRGGAGY). The span at 115–134 (PANVSSPEAASPEASSPRSL) shows a compositional bias: low complexity. In terms of domain architecture, PAZ spans 380 to 493 (PVIDFVIQLL…LPMEVCKIVE (114 aa)). The Piwi domain occupies 669–990 (LLIGLLPDNN…AAFRARFYME (322 aa)). The disordered stretch occupies residues 992-1021 (DSSDSGSMASGRGGGSSTSRSTRAAGGGAV).

This sequence belongs to the argonaute family. Ago subfamily.

Its function is as follows. Probably involved in the RNA silencing pathway. May bind to short RNAs such as microRNAs (miRNAs) or short interfering RNAs (siRNAs), and represses the translation of mRNAs which are complementary to them. The polypeptide is Protein argonaute 1D (AGO1D) (Oryza sativa subsp. japonica (Rice)).